Consider the following 233-residue polypeptide: LOB domain-containing protein 40 (233 aa).

The LOB domain maps to 3 to 109 (MSCNGCRVLR…VEAVMRGSPV (107 aa)). Residues 143–160 (KRRSRGACKEERNVRSLS) are compositionally biased toward basic and acidic residues. The segment at 143–183 (KRRSRGACKEERNVRSLSHESSLSHESPVSSEETTTEEPKT) is disordered. Low complexity predominate over residues 161-175 (HESSLSHESPVSSEE).

This sequence belongs to the LOB domain-containing protein family. As to expression, expressed in roots and flowers.

The chain is LOB domain-containing protein 40 (LBD40) from Arabidopsis thaliana (Mouse-ear cress).